The following is a 230-amino-acid chain: Orotidine 5'-phosphate decarboxylase (230 aa).

Residues aspartate 10, lysine 31, 58–67 (DLKLHDIPNT), threonine 117, arginine 179, glutamine 188, glycine 208, and arginine 209 each bind substrate. Lysine 60 functions as the Proton donor in the catalytic mechanism.

Belongs to the OMP decarboxylase family. Type 1 subfamily. Homodimer.

The enzyme catalyses orotidine 5'-phosphate + H(+) = UMP + CO2. It functions in the pathway pyrimidine metabolism; UMP biosynthesis via de novo pathway; UMP from orotate: step 2/2. Catalyzes the decarboxylation of orotidine 5'-monophosphate (OMP) to uridine 5'-monophosphate (UMP). The polypeptide is Orotidine 5'-phosphate decarboxylase (Staphylococcus epidermidis (strain ATCC 35984 / DSM 28319 / BCRC 17069 / CCUG 31568 / BM 3577 / RP62A)).